We begin with the raw amino-acid sequence, 72 residues long: Translation initiation factor IF-1 (72 aa).

The 72-residue stretch at 1–72 folds into the S1-like domain; sequence MSKEDVIEVE…TRGRITWRKK (72 aa).

It belongs to the IF-1 family. Component of the 30S ribosomal translation pre-initiation complex which assembles on the 30S ribosome in the order IF-2 and IF-3, IF-1 and N-formylmethionyl-tRNA(fMet); mRNA recruitment can occur at any time during PIC assembly.

The protein resides in the cytoplasm. Its function is as follows. One of the essential components for the initiation of protein synthesis. Stabilizes the binding of IF-2 and IF-3 on the 30S subunit to which N-formylmethionyl-tRNA(fMet) subsequently binds. Helps modulate mRNA selection, yielding the 30S pre-initiation complex (PIC). Upon addition of the 50S ribosomal subunit IF-1, IF-2 and IF-3 are released leaving the mature 70S translation initiation complex. The protein is Translation initiation factor IF-1 of Alkaliphilus metalliredigens (strain QYMF).